A 135-amino-acid chain; its full sequence is MLSPKRTRFRKQHRGRMKGISYRGNHICFGRYALQALEPAWITSRQIEAGRKSMARYARRGGKIWIRIFPDKPVTVRPTETRMGSGKGSPEYWVSVVKPGRILYEMGGVSEIAAREAISIAASKMPIRTQFVIAG.

It belongs to the universal ribosomal protein uL16 family. As to quaternary structure, part of the 50S ribosomal subunit.

The protein localises to the plastid. It is found in the chloroplast. The sequence is that of Large ribosomal subunit protein uL16c from Nandina domestica (Heavenly bamboo).